The following is an 857-amino-acid chain: Cation/H(+) antiporter 25 (857 aa).

11 helical membrane passes run 65-85 (FSTF…VYVL), 93-110 (RIVC…SMLG), 122-142 (PIAN…FFFL), 161-181 (YIAA…GAAL), 194-214 (SIGG…YTVL), 227-247 (FAMS…VLFE), 259-279 (YSVI…LLVV), 313-333 (FLTD…GLVV), 385-405 (IYMS…AALF), 413-435 (SLTL…LHWI), and 447-467 (VMVL…SFLY). The residue at position 855 (serine 855) is a Phosphoserine.

This sequence belongs to the monovalent cation:proton antiporter 2 (CPA2) transporter (TC 2.A.37) family. CHX (TC 2.A.37.4) subfamily. Specifically expressed in pollen.

Its subcellular location is the membrane. May operate as a cation/H(+) antiporter. The sequence is that of Cation/H(+) antiporter 25 (CHX25) from Arabidopsis thaliana (Mouse-ear cress).